The primary structure comprises 340 residues: HTH-type transcriptional regulator CelR (340 aa).

An HTH lacI-type domain is found at methionine 1–threonine 61. The H-T-H motif DNA-binding region spans leucine 9 to asparagine 28.

Its subcellular location is the cytoplasm. Its activity is regulated as follows. Activity is controlled by cytoplasmic cellobiose levels. Binding of CelR to the celE promoter is inhibited specifically by low concentrations of cellobiose, the major end product of cellulases. Activity may also be regulated through post-translational modification. Transcriptional regulator that regulates the expression of all six cellulases, encoded by the cel genes (designated celA through celF). Acts as a repressor. Specifically binds to a 14-bp inverted repeat site, which is present in the upstream region of the cellulase genes. This is HTH-type transcriptional regulator CelR from Thermobifida fusca (Thermomonospora fusca).